The following is a 465-amino-acid chain: Cysteine--tRNA ligase (465 aa).

Cys29 lines the Zn(2+) pocket. A 'HIGH' region motif is present at residues 31 to 41 (PTVYNYIHIGN). Zn(2+) is bound by residues Cys209, His234, and Glu238. Positions 266 to 270 (KMSKS) match the 'KMSKS' region motif. Lys269 lines the ATP pocket. Position 270 is a phosphoserine (Ser270).

It belongs to the class-I aminoacyl-tRNA synthetase family. Monomer. Zn(2+) serves as cofactor.

It is found in the cytoplasm. It carries out the reaction tRNA(Cys) + L-cysteine + ATP = L-cysteinyl-tRNA(Cys) + AMP + diphosphate. The sequence is that of Cysteine--tRNA ligase from Bacillus cereus (strain 03BB102).